The chain runs to 162 residues: Ribonuclease H (162 aa).

The RNase H type-1 domain maps to methionine 1–alanine 141. Positions 9, 47, 69, and 133 each coordinate Mg(2+). The tract at residues glycine 139–arginine 162 is disordered.

The protein belongs to the RNase H family. In terms of assembly, monomer. It depends on Mg(2+) as a cofactor.

It is found in the cytoplasm. The enzyme catalyses Endonucleolytic cleavage to 5'-phosphomonoester.. In terms of biological role, endonuclease that specifically degrades the RNA of RNA-DNA hybrids. The sequence is that of Ribonuclease H from Chelativorans sp. (strain BNC1).